Consider the following 122-residue polypeptide: Small ribosomal subunit protein uS13 (122 aa).

The segment at 92 to 122 (HRRGLPVRGQRTHTNARTRKGPAKPIAGKKK) is disordered.

The protein belongs to the universal ribosomal protein uS13 family. As to quaternary structure, part of the 30S ribosomal subunit. Forms a loose heterodimer with protein S19. Forms two bridges to the 50S subunit in the 70S ribosome.

Located at the top of the head of the 30S subunit, it contacts several helices of the 16S rRNA. In the 70S ribosome it contacts the 23S rRNA (bridge B1a) and protein L5 of the 50S subunit (bridge B1b), connecting the 2 subunits; these bridges are implicated in subunit movement. Contacts the tRNAs in the A and P-sites. This chain is Small ribosomal subunit protein uS13, found in Paracoccus denitrificans (strain Pd 1222).